The chain runs to 415 residues: Corticotropin-releasing factor receptor 1 (415 aa).

The N-terminal stretch at 1-23 is a signal peptide; it reads MGQRPQLRLVKALLLLGLNPVST. Residues 24 to 111 lie on the Extracellular side of the membrane; the sequence is SLQDQQCESL…CQEILNEEKK (88 aa). Disulfide bonds link Cys30–Cys54, Cys44–Cys87, and Cys68–Cys102. Asn38, Asn45, Asn78, Asn90, and Asn98 each carry an N-linked (GlcNAc...) asparagine glycan. The important for peptide agonist binding stretch occupies residues 99-108; the sequence is YSECQEILNE. A helical membrane pass occupies residues 112–142; sequence SKVHYHIAVIINYLGHCISLVALLVAFVLFL. At 143-149 the chain is on the cytoplasmic side; that stretch reads RLRSIRC. The chain crosses the membrane as a helical span at residues 150-174; sequence LRNIIHWNLISAFILRNATWFVVQL. Topologically, residues 175–189 are extracellular; the sequence is TVSPEVHQSNVAWCR. Cys188 and Cys258 are oxidised to a cystine. Residues 190-218 traverse the membrane as a helical segment; that stretch reads LVTAAYNYFHVTNFFWMFGEGCYLHTAIV. Residues 219–225 lie on the Cytoplasmic side of the membrane; the sequence is LTYSTDR. The chain crosses the membrane as a helical span at residues 226–253; it reads LRKWMFVCIGWGVPFPIIVAWAIGKLYY. Over 254 to 269 the chain is Extracellular; sequence DNEKCWFGKRPGVYTD. A helical membrane pass occupies residues 270-295; that stretch reads YIYQGPMILVLLINFIFLFNIVRILM. The tract at residues 280 to 290 is important for antagonist binding; that stretch reads LLINFIFLFNI. Residues 296 to 306 are Cytoplasmic-facing; that stretch reads TKLRASTTSET. Ser301 is modified (phosphoserine; by PKA). A helical transmembrane segment spans residues 307–331; sequence IQYRKAVKATLVLLPLLGITYMLFF. The Extracellular portion of the chain corresponds to 332-338; sequence VNPGEDE. A helical transmembrane segment spans residues 339-368; the sequence is VSRVVFIYFNSFLESFQGFFVSVFYCFLNS. At 369 to 415 the chain is on the cytoplasmic side; that stretch reads EVRSAIRKRWRRWQDKHSIRARVARAMSIPTSPTRVSFHSIKQSTAV.

This sequence belongs to the G-protein coupled receptor 2 family. As to quaternary structure, heterodimer; heterodimerizes with GPER1. Interacts (via N-terminal extracellular domain) with CRH and UCN. Interacts with DLG1; this inhibits endocytosis of CRHR1 after agonist binding. C-terminal Ser or Thr residues may be phosphorylated. Post-translationally, phosphorylation at Ser-301 by PKA prevents maximal coupling to Gq-protein, and thereby negatively regulates downstream signaling. As to expression, detected in brain cortex (at protein level).

The protein localises to the cell membrane. The protein resides in the endosome. G-protein coupled receptor for CRH (corticotropin-releasing factor) and UCN (urocortin). Has high affinity for CRH and UCN. Ligand binding causes a conformation change that triggers signaling via guanine nucleotide-binding proteins (G proteins) and down-stream effectors, such as adenylate cyclase. Promotes the activation of adenylate cyclase, leading to increased intracellular cAMP levels. Inhibits the activity of the calcium channel CACNA1H. Required for normal embryonic development of the adrenal gland and for normal hormonal responses to stress. Plays a role in the response to anxiogenic stimuli. The polypeptide is Corticotropin-releasing factor receptor 1 (Crhr1) (Mus musculus (Mouse)).